Reading from the N-terminus, the 153-residue chain is Small ribosomal subunit protein bS16 (153 aa).

Residues 130 to 153 are disordered; that stretch reads EAEAAAAAEEAPAEEAAEEAPAEA. The span at 140–153 shows a compositional bias: acidic residues; the sequence is APAEEAAEEAPAEA.

It belongs to the bacterial ribosomal protein bS16 family.

The protein is Small ribosomal subunit protein bS16 of Bifidobacterium longum subsp. infantis (strain ATCC 15697 / DSM 20088 / JCM 1222 / NCTC 11817 / S12).